Consider the following 225-residue polypeptide: Ras-related protein Rab-32 (225 aa).

The residue at position 2 (Ala-2) is an N-acetylalanine. GTP contacts are provided by Val-36, Gly-37, Lys-38, Thr-39, Ser-40, Ser-51, Gln-52, Tyr-54, and Thr-57. Thr-39 lines the Mg(2+) pocket. The short motif at Gln-48–Phe-62 is the Switch 1 element. Thr-57 provides a ligand contact to Mg(2+). Ser-71 is modified (phosphoserine). Asp-81 is a binding site for Mg(2+). Residues Gly-84, Asn-143, Lys-144, Asp-146, Ala-175, and Lys-176 each coordinate GTP. Residues Gly-84–Lys-97 carry the Switch 2 motif. The interval Asn-178–Gln-197 is PKA-RII subunit binding domain. Residues Cys-224 and Cys-225 are each lipidated (S-geranylgeranyl cysteine).

The protein belongs to the small GTPase superfamily. Rab family. In terms of assembly, interacts with ANKRD27. A decreased interaction with ANKRD27 seen in the presence of SGSM2. Interacts with LRRK2 (via N-terminus); this interaction results in stimulation of RAB10 phosphorylation by LRRK2. It depends on Mg(2+) as a cofactor. As to expression, widely expressed with high levels in heart, liver, kidney, bone marrow, testis, colon and fetal lung.

Its subcellular location is the mitochondrion. The protein resides in the mitochondrion outer membrane. It localises to the cytoplasmic vesicle. It is found in the phagosome. The protein localises to the phagosome membrane. Its subcellular location is the melanosome. The protein resides in the melanosome membrane. The catalysed reaction is GTP + H2O = GDP + phosphate + H(+). With respect to regulation, regulated by guanine the nucleotide exchange factor (GEF) BLOC-3 complex composed of HPS1 and HPS4 which promote the exchange of bound GDP for free GTP. Regulated by the GTPase activating protein (GAP) SGSM2/RUTBC1 which increases the GTP hydrolysis activity. Inhibited by GDP dissociation inhibitors (GDIs) which prevent Rab-GDP dissociation. The small GTPases Rab are key regulators of intracellular membrane trafficking, from the formation of transport vesicles to their fusion with membranes. Rabs cycle between an inactive GDP-bound form and an active GTP-bound form that is able to recruit to membranes different set of downstream effectors directly responsible for vesicle formation, movement, tethering and fusion. Also acts as an A-kinase anchoring protein by binding to the type II regulatory subunit of protein kinase A and anchoring it to the mitochondrion. Also involved in synchronization of mitochondrial fission. Plays a role in the maturation of phagosomes that engulf pathogens, such as S.aureus and M.tuberculosis. Plays an important role in the control of melanin production and melanosome biogenesis. In concert with RAB38, regulates the proper trafficking of melanogenic enzymes TYR, TYRP1 and DCT/TYRP2 to melanosomes in melanocytes. Stimulates phosphorylation of RAB10 'Thr-73' by LRRK2. The polypeptide is Ras-related protein Rab-32 (Homo sapiens (Human)).